We begin with the raw amino-acid sequence, 378 residues long: Mannitol-1-phosphate 5-dehydrogenase (378 aa).

NAD(+) is bound at residue 4–15 (SVHFGAGNIGRG).

It belongs to the mannitol dehydrogenase family.

The catalysed reaction is D-mannitol 1-phosphate + NAD(+) = beta-D-fructose 6-phosphate + NADH + H(+). This Streptococcus pneumoniae (strain ATCC 700669 / Spain 23F-1) protein is Mannitol-1-phosphate 5-dehydrogenase.